The chain runs to 372 residues: Alanine dehydrogenase 2 (372 aa).

His95 is an active-site residue. 169-199 contributes to the NAD(+) binding site; it reads KVTIIGGGQAGTNAAKIALGLGADVTILDVN.

The protein belongs to the AlaDH/PNT family.

It catalyses the reaction L-alanine + NAD(+) + H2O = pyruvate + NH4(+) + NADH + H(+). It functions in the pathway amino-acid degradation; L-alanine degradation via dehydrogenase pathway; NH(3) and pyruvate from L-alanine: step 1/1. May play a role in cell wall synthesis as L-alanine is an important constituent of the peptidoglycan layer. The sequence is that of Alanine dehydrogenase 2 (ald2) from Staphylococcus aureus (strain COL).